The sequence spans 338 residues: MVGRVQPDRKQLPLVLLRLLCLLPTGLPVRSVDFNRGTDNITVRQGDTAILRCVVEDKNSKVAWLNRSGIIFAGHDKWSLDPRVELEKRHALEYSLRIQKVDVYDEGSYTCSVQTQHEPKTSQVYLIVQVPPKISNISSDVTVNEGSNVTLVCMANGRPEPVITWRHLTPLGREFEGEEEYLEILGITREQSGKYECKAANEVSSADVKQVKVTVNYPPTITESKSNEATTGRQASLKCEASAVPAPDFEWYRDDTRINSANGLEIKSTEGQSSLTVTNVTEEHYGNYTCVAANKLGVTNASLVLFRPGSVRGINGSISLAVPLWLLAASLFCLLSKC.

The first 28 residues, methionine 1–proline 28, serve as a signal peptide directing secretion. 3 Ig-like C2-type domains span residues valine 29–serine 122, proline 132–threonine 214, and proline 219–valine 304. N-linked (GlcNAc...) asparagine glycans are attached at residues asparagine 40 and asparagine 66. Cysteine 53 and cysteine 111 are disulfide-bonded. A Phosphotyrosine modification is found at tyrosine 94. 2 N-linked (GlcNAc...) asparagine glycosylation sites follow: asparagine 136 and asparagine 148. Cystine bridges form between cysteine 153–cysteine 197 and cysteine 239–cysteine 290. 3 N-linked (GlcNAc...) asparagine glycosylation sites follow: asparagine 279, asparagine 287, and asparagine 300. The GPI-anchor amidated asparagine; alternate moiety is linked to residue asparagine 315. N-linked (GlcNAc...) asparagine; alternate glycosylation is present at asparagine 315. Positions glycine 316–cysteine 338 are cleaved as a propeptide — removed in mature form.

It belongs to the immunoglobulin superfamily. IgLON family. As to expression, expressed mostly by neurons comprising limbic-associated cortical and subcortical regions that function in cognition, emotion, memory, and learning.

Its subcellular location is the cell membrane. Its function is as follows. Mediates selective neuronal growth and axon targeting. Contributes to the guidance of developing axons and remodeling of mature circuits in the limbic system. Essential for normal growth of the hippocampal mossy fiber projection. The sequence is that of Limbic system-associated membrane protein (Lsamp) from Rattus norvegicus (Rat).